We begin with the raw amino-acid sequence, 1377 residues long: DNA-directed RNA polymerase subunit beta (1377 aa).

Belongs to the RNA polymerase beta chain family. In terms of assembly, the RNAP catalytic core consists of 2 alpha, 1 beta, 1 beta' and 1 omega subunit. When a sigma factor is associated with the core the holoenzyme is formed, which can initiate transcription.

The catalysed reaction is RNA(n) + a ribonucleoside 5'-triphosphate = RNA(n+1) + diphosphate. DNA-dependent RNA polymerase catalyzes the transcription of DNA into RNA using the four ribonucleoside triphosphates as substrates. The sequence is that of DNA-directed RNA polymerase subunit beta from Aromatoleum aromaticum (strain DSM 19018 / LMG 30748 / EbN1) (Azoarcus sp. (strain EbN1)).